A 359-amino-acid polypeptide reads, in one-letter code: Malonyl-CoA reductase (359 aa).

16–19 serves as a coordination point for NADP(+); that stretch reads TGLV. The active-site Acyl-thioester intermediate is cysteine 153. Position 183 to 184 (183 to 184) interacts with NADP(+); sequence SG. Histidine 248 (proton acceptor) is an active-site residue. NADP(+) is bound at residue 335–336; the sequence is NT.

Belongs to the aspartate-semialdehyde dehydrogenase family. Homodimer and possibly a tetramer. The cofactor is Mg(2+). Mn(2+) is required as a cofactor.

It carries out the reaction 3-oxopropanoate + NADP(+) + CoA = malonyl-CoA + NADPH + H(+). With respect to regulation, activated by dithioerythritol (5 mM) and inhibited by the thiol-blocking agent iodoacetamide (0.1 mM). Catalyzes the reduction of malonyl-CoA to malonate semialdehyde, a key step in the 3-hydroxypropanoate and the 3-hydroxypropanoate/4-hydroxybutyrate cycles. Can also use succinyl-CoA and succinate semialdehyde as substrates but at a lower rate than malonyl-CoA. The protein is Malonyl-CoA reductase (mcr) of Sulfurisphaera tokodaii (strain DSM 16993 / JCM 10545 / NBRC 100140 / 7) (Sulfolobus tokodaii).